Consider the following 399-residue polypeptide: MTDVQAALELIKRGAEELLVEAELVEKLESDRPLRVKAGFDPTAPDLHLGHTVLLNKLRHFQELGHQVMFLVGDFTAMIGDPSGKNATRPPLSREQILENARTYQEQVFKILDPDKTEICFNSSWMESLGTAGMIRLASRYTVARMLERDDFAKRYAGGQAIAIHEFLYPLCQGYDSVAMRADVELGGTDQKFNLLVGRELQKHDRQAPQCVLMMPLLEGLDGVNKMSKSLGNYIGITEAPREIFGKIMSISDSLMWRYFDLLSFHPAVEIARYRAEVEGGRNPRELKVLLAQEIVARFHSHAAAEDALADFEARFQRGVLPDDIPEVNVVVGDGGLPVFQVVKQAGLTGSTSEALRMIEQGAVRLNGERVEDKGLVLQRDQTVVLQVGKRKFASVVLN.

A 'HIGH' region motif is present at residues 42 to 51; sequence PTAPDLHLGH. Residues 226 to 230 carry the 'KMSKS' region motif; it reads KMSKS. Lys229 contacts ATP. Residues 337–398 form the S4 RNA-binding domain; the sequence is LPVFQVVKQA…GKRKFASVVL (62 aa).

The protein belongs to the class-I aminoacyl-tRNA synthetase family. TyrS type 2 subfamily. As to quaternary structure, homodimer.

It is found in the cytoplasm. It carries out the reaction tRNA(Tyr) + L-tyrosine + ATP = L-tyrosyl-tRNA(Tyr) + AMP + diphosphate + H(+). Catalyzes the attachment of tyrosine to tRNA(Tyr) in a two-step reaction: tyrosine is first activated by ATP to form Tyr-AMP and then transferred to the acceptor end of tRNA(Tyr). In Aromatoleum aromaticum (strain DSM 19018 / LMG 30748 / EbN1) (Azoarcus sp. (strain EbN1)), this protein is Tyrosine--tRNA ligase.